A 176-amino-acid polypeptide reads, in one-letter code: Dual-action ribosomal maturation protein DarP (176 aa).

The segment covering Met1 to Ser16 has biased composition (acidic residues). The segment at Met1–Glu29 is disordered.

The protein belongs to the DarP family.

It is found in the cytoplasm. Functionally, member of a network of 50S ribosomal subunit biogenesis factors which assembles along the 30S-50S interface, preventing incorrect 23S rRNA structures from forming. Promotes peptidyl transferase center (PTC) maturation. In Thiobacillus denitrificans (strain ATCC 25259 / T1), this protein is Dual-action ribosomal maturation protein DarP.